Consider the following 152-residue polypeptide: Transcriptional repressor NrdR (152 aa).

Residues 3 to 34 fold into a zinc finger; it reads CPFCNHGELKVIDSRNAPEANAIKRRRECLKC. In terms of domain architecture, ATP-cone spans 48–138; that stretch reads LQVLKRDGRY…VYRRFKDVGE (91 aa).

This sequence belongs to the NrdR family. The cofactor is Zn(2+).

Negatively regulates transcription of bacterial ribonucleotide reductase nrd genes and operons by binding to NrdR-boxes. In Chlamydia pneumoniae (Chlamydophila pneumoniae), this protein is Transcriptional repressor NrdR.